The chain runs to 219 residues: uncharacterized protein (219 aa).

The N-terminal stretch at 1–15 is a signal peptide; that stretch reads MYVLFLLSWVLVAGA. A glycan (N-linked (GlcNAc...) asparagine) is linked at Asn118. The disordered stretch occupies residues 138–174; it reads GEVGEDPGKRARKRRLGLPIGEPGEDVGKRMRQRQQG.

As to expression, component of the acid-insoluble and acid-soluble organic matrix of calcified layers of the shell (at protein level).

The protein localises to the secreted. This is an uncharacterized protein from Lottia gigantea (Giant owl limpet).